The sequence spans 728 residues: Homoaconitase, mitochondrial (728 aa).

The N-terminal 24 residues, 1 to 24, are a transit peptide targeting the mitochondrion; the sequence is MVAIPRLARLSVPAWALSARGRFY. Residues Cys-362, Cys-422, and Cys-425 each coordinate [4Fe-4S] cluster.

Belongs to the aconitase/IPM isomerase family. [4Fe-4S] cluster serves as cofactor.

It localises to the mitochondrion. It carries out the reaction (2R,3S)-homoisocitrate = cis-homoaconitate + H2O. It functions in the pathway amino-acid biosynthesis; L-lysine biosynthesis via AAA pathway; L-alpha-aminoadipate from 2-oxoglutarate: step 3/5. In terms of biological role, catalyzes the reversible hydration of cis-homoaconitate to (2R,3S)-homoisocitrate, a step in the alpha-aminoadipate pathway for lysine biosynthesis. This Cryptococcus neoformans var. neoformans serotype D (strain JEC21 / ATCC MYA-565) (Filobasidiella neoformans) protein is Homoaconitase, mitochondrial (LYS4).